A 381-amino-acid polypeptide reads, in one-letter code: Protein palisade (381 aa).

Residues 1 to 25 (MMMHSRNRSWTLTLLALGVVLATSA) form the signal peptide. 6 repeat units span residues 190 to 199 (PAAPAYEAPA), 200 to 209 (PPAPAYEAPA), 210 to 219 (PPAPAYEAPA), 220 to 229 (PAAPAYEAPA), 230 to 239 (PAAPAYEAPT), and 247 to 256 (PPAPAYEPPA). Positions 190 to 256 (PAAPAYEAPA…PPAPAYEPPA (67 aa)) are 6 X 10 AA approximate tandem repeats of P-[AP]-A-P-A-Y-E-[AP]-P-[AT]. Disordered regions lie at residues 236-270 (EAPT…AQPS) and 309-329 (TPTA…PSQN). The segment covering 311 to 321 (TAPPPPPPPAP) has biased composition (pro residues).

Post-translationally, sulfated by pip; may be involved in embryo dorsal-ventral axis determination. Sulfation by pip may occur on covalently bound glycosaminoglycans. May undergo both disulfide and non-disulfide cross-linking upon incorporation into the vitelline membrane. In terms of tissue distribution, present in the perivitelline space of stage 10 egg chambers and in the vitelline membrane adjacent to the oocyte in stage 13 and 14 egg chambers (at protein level).

The protein localises to the secreted. It is found in the extracellular space. The protein resides in the extracellular matrix. Its function is as follows. Minor protein component of the vitelline membrane. Involved in vitelline membrane biogenesis during late stages of oogenesis. Required for efficient disulfide and non-disulfide cross-linking of several vitelline membrane components. The sequence is that of Protein palisade from Drosophila melanogaster (Fruit fly).